We begin with the raw amino-acid sequence, 148 residues long: MKVIFTQDVKGKGKKGEVKEVPVGYANNFLLKKNYAVEATPGNLKQLELQKKRAKQERQQEIEDAKALKETLSNIEVEVSAKTGEGGKLFGSVSTKQIAEALKTQHDIKIDKRKMDLPNGIHSLGYTNVPVKLDKEVEGTIRVHTVEQ.

The protein belongs to the bacterial ribosomal protein bL9 family.

Its function is as follows. Binds to the 23S rRNA. In Staphylococcus aureus (strain bovine RF122 / ET3-1), this protein is Large ribosomal subunit protein bL9.